A 239-amino-acid polypeptide reads, in one-letter code: Ribosomal RNA small subunit methyltransferase G (239 aa).

S-adenosyl-L-methionine is bound by residues glycine 79, phenylalanine 84, 130-131 (AE), and arginine 149.

It belongs to the methyltransferase superfamily. RNA methyltransferase RsmG family.

It localises to the cytoplasm. Specifically methylates the N7 position of a guanine in 16S rRNA. This is Ribosomal RNA small subunit methyltransferase G from Lactobacillus delbrueckii subsp. bulgaricus (strain ATCC BAA-365 / Lb-18).